The primary structure comprises 271 residues: tRNA pseudouridine synthase A (271 aa).

Catalysis depends on Asp-52, which acts as the Nucleophile. Tyr-110 lines the substrate pocket.

Belongs to the tRNA pseudouridine synthase TruA family. In terms of assembly, homodimer.

The catalysed reaction is uridine(38/39/40) in tRNA = pseudouridine(38/39/40) in tRNA. Its function is as follows. Formation of pseudouridine at positions 38, 39 and 40 in the anticodon stem and loop of transfer RNAs. The polypeptide is tRNA pseudouridine synthase A (Burkholderia mallei (strain NCTC 10247)).